Reading from the N-terminus, the 98-residue chain is NADH-ubiquinone oxidoreductase chain 4L (98 aa).

3 helical membrane passes run 1–21, 28–48, and 59–79; these read MTPL…GVLI, STLL…SLLI, and APLI…ALLV.

Belongs to the complex I subunit 4L family. Core subunit of respiratory chain NADH dehydrogenase (Complex I) which is composed of 45 different subunits.

It localises to the mitochondrion inner membrane. It carries out the reaction a ubiquinone + NADH + 5 H(+)(in) = a ubiquinol + NAD(+) + 4 H(+)(out). In terms of biological role, core subunit of the mitochondrial membrane respiratory chain NADH dehydrogenase (Complex I) which catalyzes electron transfer from NADH through the respiratory chain, using ubiquinone as an electron acceptor. Part of the enzyme membrane arm which is embedded in the lipid bilayer and involved in proton translocation. The polypeptide is NADH-ubiquinone oxidoreductase chain 4L (MT-ND4L) (Tarsipes rostratus (Honey possum)).